The chain runs to 206 residues: Large ribosomal subunit protein uL4 (206 aa).

The disordered stretch occupies residues 46–77 (GTRAQKDREQVRHSTKKPFKQKGTGRARAGMT). The segment covering 58 to 70 (HSTKKPFKQKGTG) has biased composition (basic residues).

Belongs to the universal ribosomal protein uL4 family. Part of the 50S ribosomal subunit.

In terms of biological role, one of the primary rRNA binding proteins, this protein initially binds near the 5'-end of the 23S rRNA. It is important during the early stages of 50S assembly. It makes multiple contacts with different domains of the 23S rRNA in the assembled 50S subunit and ribosome. Forms part of the polypeptide exit tunnel. In Polaromonas naphthalenivorans (strain CJ2), this protein is Large ribosomal subunit protein uL4.